The chain runs to 151 residues: Protein ripply1 (151 aa).

The short motif at 57 to 60 (WRPW) is the WRPW motif element. A ripply homology domain region spans residues 96 to 131 (HPVRLFWPKSRSFDYLYSAGEILLQNFPVQATINLY). The disordered stretch occupies residues 130-151 (LYEDSDSEEEEEDEEQEDEEEK). Residues 132–151 (EDSDSEEEEEDEEQEDEEEK) show a composition bias toward acidic residues.

This sequence belongs to the ripply family.

Its subcellular location is the nucleus. Functionally, plays a role in somitogenesis. Essential for transcriptional repression of the segmental patterning genes, thus terminating the segmentation program in the presomitic mesoderm, and also required for the maintenance of rostrocaudal polarity in somites. This chain is Protein ripply1, found in Homo sapiens (Human).